The primary structure comprises 185 residues: MLNIVLIIGLLAIFNTSSASNDVCHVTRKPLMLPAPGDVYKKAVQFYSNITAPRSTSVLAPVMSSLEVYINTTTTSAFAPAQSIKVADILEEDADAIRVKSIRMAGFIAQCIIFLFVYTIVTMDVEIWKINMDWLKIQYFQHFEDSAAEVPVFKLYMAREIQTCPLPARQNVMIVRQFMEMESNC.

The next 2 membrane-spanning stretches (helical) occupy residues M1–A19 and A105–V125.

It localises to the membrane. This is an uncharacterized protein from Caenorhabditis elegans.